The primary structure comprises 158 residues: Ribosome maturation factor RimP (158 aa).

This sequence belongs to the RimP family.

The protein resides in the cytoplasm. Its function is as follows. Required for maturation of 30S ribosomal subunits. The protein is Ribosome maturation factor RimP of Lactobacillus delbrueckii subsp. bulgaricus (strain ATCC 11842 / DSM 20081 / BCRC 10696 / JCM 1002 / NBRC 13953 / NCIMB 11778 / NCTC 12712 / WDCM 00102 / Lb 14).